Reading from the N-terminus, the 269-residue chain is Energy-coupling factor transporter ATP-binding protein EcfA1 (269 aa).

The 235-residue stretch at Ile8–Asp242 folds into the ABC transporter domain. Gly42–Ser49 lines the ATP pocket.

The protein belongs to the ABC transporter superfamily. Energy-coupling factor EcfA family. As to quaternary structure, forms a stable energy-coupling factor (ECF) transporter complex composed of 2 membrane-embedded substrate-binding proteins (S component), 2 ATP-binding proteins (A component) and 2 transmembrane proteins (T component).

The protein resides in the cell membrane. Its function is as follows. ATP-binding (A) component of a common energy-coupling factor (ECF) ABC-transporter complex. Unlike classic ABC transporters this ECF transporter provides the energy necessary to transport a number of different substrates. This is Energy-coupling factor transporter ATP-binding protein EcfA1 from Staphylococcus aureus (strain MRSA252).